A 501-amino-acid chain; its full sequence is Dipeptide and tripeptide permease A (501 aa).

The Cytoplasmic portion of the chain corresponds to 1 to 34; the sequence is MSTANNKPTESVSLNAFKQPKSFYLIFSIELWER. Residues 35 to 55 form a helical membrane-spanning segment; it reads FGYYGLQGIMAVYLVKQLGMS. The Periplasmic segment spans residues 56-59; sequence EADS. A helical transmembrane segment spans residues 60 to 80; the sequence is ITLFSSFSALVYGLVAIGGWL. Residues 81–89 are Cytoplasmic-facing; it reads GDKVLGTKR. Residues 90–110 form a helical membrane-spanning segment; it reads VIMLGAIVLAIGYGLVAWSGH. Residue aspartate 111 is a topological domain, periplasmic. Residues 112 to 132 traverse the membrane as a helical segment; sequence VAIVYMGMATIAVGNGLFKAN. At 133–153 the chain is on the cytoplasmic side; it reads PSSLLSTCYAKDDPRLDGAFT. A helical membrane pass occupies residues 154–174; sequence MYYMSINIGSFFSMLATPWLA. The Periplasmic segment spans residues 175 to 178; the sequence is AKFG. A helical transmembrane segment spans residues 179–199; the sequence is WSVAFALSFVGMLITVVNFLF. At 200 to 217 the chain is on the cytoplasmic side; it reads CRSWVKDYGSKPDFEAVH. The chain crosses the membrane as a helical span at residues 218-238; sequence FGKLLATIAGVIVLIAIATWL. The Periplasmic segment spans residues 239 to 246; the sequence is LHNQGIAR. A helical transmembrane segment spans residues 247–267; that stretch reads MVLGVIALGIVIIFGKEAFAM. Residues 268-274 lie on the Cytoplasmic side of the membrane; that stretch reads QGAARRK. Residues 275–295 traverse the membrane as a helical segment; sequence MIVAFILMLEAIIFFVLYSQM. At 296-320 the chain is on the periplasmic side; sequence PTSLNFFAIRNVEHTILGIAVEPEQ. The helical transmembrane segment at 321 to 341 threads the bilayer; that stretch reads YQALNPFWIIIGSPILAAIYN. Residues 342–352 are Cytoplasmic-facing; sequence KMGDTLPMPTK. Residues 353-373 traverse the membrane as a helical segment; sequence FAIGMVLCSGAFLVLPLGAKF. At 374 to 383 the chain is on the periplasmic side; sequence ATDAGIVSVN. The chain crosses the membrane as a helical span at residues 384 to 404; the sequence is WLILSYGLQSIGELMISGLGL. At 405 to 414 the chain is on the cytoplasmic side; it reads AMVAQLVPQR. Residues 415 to 435 form a helical membrane-spanning segment; sequence LMGFIMGSWFLTTAGANLIGG. The Periplasmic segment spans residues 436-459; that stretch reads YVAGMMAVPENVTDPLMSLEVYGR. Residues 460–480 form a helical membrane-spanning segment; that stretch reads VFLQIGVATAVIAALMLITAP. Over 481–501 the chain is Cytoplasmic; it reads KLNRMTQDDEENAKAAKTATA.

This sequence belongs to the major facilitator superfamily. Proton-dependent oligopeptide transporter (POT/PTR) (TC 2.A.17) family. DtpA subfamily.

The protein resides in the cell inner membrane. Its function is as follows. Proton-dependent permease that transports di- and tripeptides. This Citrobacter koseri (strain ATCC BAA-895 / CDC 4225-83 / SGSC4696) protein is Dipeptide and tripeptide permease A.